The following is a 671-amino-acid chain: APC membrane recruitment protein 2 (671 aa).

Disordered regions lie at residues 1–24, 76–358, 391–414, and 444–598; these read METSRSRGGGGAVSERGGAGASVG, SGGT…SDPS, EAGPSCDKHVPGPGKPALSKKNPG, and SQTE…PLRT. Gly residues-rich tracts occupy residues 7–21 and 126–137; these read RGGGGAVSERGGAGA and GGDSGGGGGGRP. Residue Ser162 is modified to Phosphoserine. A compositionally biased stretch (basic and acidic residues) spans 171–182; the sequence is GRSENGKGEPVD. A phosphoserine mark is found at Ser229 and Ser233. Composition is skewed to basic and acidic residues over residues 236 to 260, 276 to 286, and 295 to 307; these read CVKEETPRAAREPEEPSQDAPRDPA, APARSCREAEG, and ARGEDAAGHRRAE. Over residues 342–353 the composition is skewed to low complexity; it reads APAAPDPASVDP. Ser355 and Ser358 each carry phosphoserine. A compositionally biased stretch (low complexity) spans 447–458; it reads EEQGPEPQEGAA. Composition is skewed to basic and acidic residues over residues 472–487 and 498–514; these read TPKDTRCVEAAKDASS and IEPHPKEEPKHPEKEQQ.

Belongs to the Amer family. In terms of assembly, interacts with APC.

The protein localises to the cell membrane. In terms of biological role, negative regulator of the canonical Wnt signaling pathway involved in neuroectodermal patterning. Acts by specifically binding phosphatidylinositol 4,5-bisphosphate (PtdIns(4,5)P2), translocating to the cell membrane and interacting with key regulators of the canonical Wnt signaling pathway, such as components of the beta-catenin destruction complex. The polypeptide is APC membrane recruitment protein 2 (AMER2) (Homo sapiens (Human)).